The chain runs to 464 residues: Glutamate decarboxylase (464 aa).

N6-(pyridoxal phosphate)lysine is present on Lys-274.

It belongs to the group II decarboxylase family. The cofactor is pyridoxal 5'-phosphate.

It carries out the reaction L-glutamate + H(+) = 4-aminobutanoate + CO2. Catalyzes the pyridoxal-dependent decarboxylation of glutamate to produce 4-aminobutanoate. Has weak activity with aspartate, but cannot complement an E.coli panD deletion mutant. The sequence is that of Glutamate decarboxylase from Aliivibrio fischeri (strain ATCC 700601 / ES114) (Vibrio fischeri).